The following is a 42-amino-acid chain: Large ribosomal subunit protein bL36 (42 aa).

It belongs to the bacterial ribosomal protein bL36 family.

This chain is Large ribosomal subunit protein bL36, found in Wolbachia pipientis subsp. Culex pipiens (strain wPip).